The sequence spans 226 residues: NADH-ubiquinone oxidoreductase chain 6 (226 aa).

A run of 5 helical transmembrane segments spans residues 2–22, 28–48, 56–76, 90–110, and 169–189; these read STLGLLLILLGIIITCTFVIL, IYSILNLIVIYGCYASILLTV, IYILVNVGAIAVLFLFIVMMI, YNIYMFVGFIGLIGIMGILIT, and IWFIMACIILLIGMVGVIYIT.

The protein belongs to the complex I subunit 6 family.

It localises to the mitochondrion membrane. It carries out the reaction a ubiquinone + NADH + 5 H(+)(in) = a ubiquinol + NAD(+) + 4 H(+)(out). In terms of biological role, core subunit of the mitochondrial membrane respiratory chain NADH dehydrogenase (Complex I) that is believed to belong to the minimal assembly required for catalysis. Complex I functions in the transfer of electrons from NADH to the respiratory chain. The immediate electron acceptor for the enzyme is believed to be ubiquinone. The sequence is that of NADH-ubiquinone oxidoreductase chain 6 (nad6) from Dictyostelium citrinum (Slime mold).